Consider the following 1220-residue polypeptide: Cullin-associated NEDD8-dissociated protein 1 (1220 aa).

HEAT repeat units follow at residues 1–35, 42–79, 121–157, 259–295, 365–410, 615–650, 680–700, 701–737, 738–775, 810–847, 850–887, and 1020–1057; these read MEEGILLKKYVESSDKDIRYMALSDLAARLNDANH, ESFPDTLDVLLQALSDASPEVQQEAVRCVAIISSKIPQ, FYTSTVFPSFLQILKQYNVAQEEFFAILCVVCDSLEI, ADYTNKILSLLKKEEAPDELTQKLLEVLGLLLEYQQV, LSRL…HVPR, IFLRRVLIILCKKLQEEPTRSAAARALCDIFMSVTD, TTAYLELLEVLLKVGQKYLAE, SLLEHILGLLIETLKRNTENTVAILKCLLIIPLSILL, KSKNLLIDTIISHLQSSTIHLNEESVCLLSRIIAVISK, FQSKAIVTSLNKSFMSPKSEVRIKVFTTLIFGQLDYGK, LPANEYFDTIASNLNSPNADVMKAAAIALGSLTSQSEK, and EVSQETLQVIISVIKNRRSCIADVYNELLQGLISKSSV.

Belongs to the CAND family.

The protein resides in the nucleus. Key assembly factor of SCF (SKP1-CUL1-F-box protein) E3 ubiquitin ligase complexes that promotes the exchange of the substrate-recognition F-box subunit in SCF complexes, thereby playing a key role in the cellular repertoire of SCF complexes. Acts as a F-box protein exchange factor. The sequence is that of Cullin-associated NEDD8-dissociated protein 1 (knd1) from Schizosaccharomyces pombe (strain 972 / ATCC 24843) (Fission yeast).